We begin with the raw amino-acid sequence, 140 residues long: MSWDSYIDNLIAQTKDASGTGHSDKACIIGIDGGAPWTTAGHANALKLEGQEGPNIARCFKSKDFTPFMSSGIVADGTKYQFLREEDGKLVLAKKKGQGALTLQSSKTAIVIGHAPEGGQQGNTNKGVAVIAEYLESLGM.

The residue at position 2 (Ser2) is an N-acetylserine.

This sequence belongs to the profilin family. In terms of assembly, occurs in many kinds of cells as a complex with monomeric actin in a 1:1 ratio.

It is found in the cytoplasm. The protein localises to the cytoskeleton. Binds to actin and affects the structure of the cytoskeleton. At high concentrations, profilin prevents the polymerization of actin, whereas it enhances it at low concentrations. By binding to PIP2, it inhibits the formation of IP3 and DG. This chain is Profilin, found in Heliocidaris crassispina (Sea urchin).